The sequence spans 168 residues: Cyclic pyranopterin monophosphate synthase (168 aa).

Substrate is bound by residues 75–77 (MCH) and 115–116 (ME). D130 is an active-site residue.

This sequence belongs to the MoaC family. In terms of assembly, homohexamer; trimer of dimers.

It carries out the reaction (8S)-3',8-cyclo-7,8-dihydroguanosine 5'-triphosphate = cyclic pyranopterin phosphate + diphosphate. Its pathway is cofactor biosynthesis; molybdopterin biosynthesis. Its function is as follows. Catalyzes the conversion of (8S)-3',8-cyclo-7,8-dihydroguanosine 5'-triphosphate to cyclic pyranopterin monophosphate (cPMP). The sequence is that of Cyclic pyranopterin monophosphate synthase from Bacillus licheniformis (strain ATCC 14580 / DSM 13 / JCM 2505 / CCUG 7422 / NBRC 12200 / NCIMB 9375 / NCTC 10341 / NRRL NRS-1264 / Gibson 46).